A 437-amino-acid chain; its full sequence is Enolase 1 (437 aa).

Gln-164 provides a ligand contact to (2R)-2-phosphoglycerate. Glu-206 (proton donor) is an active-site residue. Asp-244, Glu-289, and Asp-316 together coordinate Mg(2+). The (2R)-2-phosphoglycerate site is built by Lys-341, Arg-370, Ser-371, and Lys-392. The active-site Proton acceptor is Lys-341.

The protein belongs to the enolase family. The cofactor is Mg(2+).

It is found in the cytoplasm. The protein resides in the secreted. It localises to the cell surface. It carries out the reaction (2R)-2-phosphoglycerate = phosphoenolpyruvate + H2O. The protein operates within carbohydrate degradation; glycolysis; pyruvate from D-glyceraldehyde 3-phosphate: step 4/5. Catalyzes the reversible conversion of 2-phosphoglycerate (2-PG) into phosphoenolpyruvate (PEP). It is essential for the degradation of carbohydrates via glycolysis. The protein is Enolase 1 of Desulfitobacterium hafniense (strain Y51).